A 100-amino-acid polypeptide reads, in one-letter code: Small ribosomal subunit protein uS14 (100 aa).

This sequence belongs to the universal ribosomal protein uS14 family. As to quaternary structure, part of the 30S ribosomal subunit. Contacts proteins S3 and S10.

In terms of biological role, binds 16S rRNA, required for the assembly of 30S particles and may also be responsible for determining the conformation of the 16S rRNA at the A site. This is Small ribosomal subunit protein uS14 from Nostoc sp. (strain PCC 7120 / SAG 25.82 / UTEX 2576).